Reading from the N-terminus, the 156-residue chain is Transcriptional repressor NrdR (156 aa).

A zinc finger spans residues 3-34; that stretch reads CPFCQHDDTQVLDTRISEEGDSIRRRRRCVSC. The ATP-cone domain occupies 49–139; the sequence is PVIVKKNGSR…VYKSFEDVAE (91 aa).

The protein belongs to the NrdR family. Zn(2+) serves as cofactor.

Functionally, negatively regulates transcription of bacterial ribonucleotide reductase nrd genes and operons by binding to NrdR-boxes. The protein is Transcriptional repressor NrdR of Herminiimonas arsenicoxydans.